Here is a 256-residue protein sequence, read N- to C-terminus: Imidazole glycerol phosphate synthase subunit HisF (256 aa).

Residues D11 and D130 contribute to the active site.

It belongs to the HisA/HisF family. Heterodimer of HisH and HisF.

The protein localises to the cytoplasm. It catalyses the reaction 5-[(5-phospho-1-deoxy-D-ribulos-1-ylimino)methylamino]-1-(5-phospho-beta-D-ribosyl)imidazole-4-carboxamide + L-glutamine = D-erythro-1-(imidazol-4-yl)glycerol 3-phosphate + 5-amino-1-(5-phospho-beta-D-ribosyl)imidazole-4-carboxamide + L-glutamate + H(+). Its pathway is amino-acid biosynthesis; L-histidine biosynthesis; L-histidine from 5-phospho-alpha-D-ribose 1-diphosphate: step 5/9. Functionally, IGPS catalyzes the conversion of PRFAR and glutamine to IGP, AICAR and glutamate. The HisF subunit catalyzes the cyclization activity that produces IGP and AICAR from PRFAR using the ammonia provided by the HisH subunit. This Cupriavidus metallidurans (strain ATCC 43123 / DSM 2839 / NBRC 102507 / CH34) (Ralstonia metallidurans) protein is Imidazole glycerol phosphate synthase subunit HisF.